The primary structure comprises 239 residues: Fatty acid metabolism regulator protein (239 aa).

The region spanning 6-74 (QSPAGFAEEY…HGKPTQVNNF (69 aa)) is the HTH gntR-type domain. Residues 34 to 53 (ERELSELIGVTRTTLREVLQ) constitute a DNA-binding region (H-T-H motif).

As to quaternary structure, homodimer.

The protein localises to the cytoplasm. Functionally, multifunctional regulator of fatty acid metabolism. This Edwardsiella ictaluri (strain 93-146) protein is Fatty acid metabolism regulator protein.